The primary structure comprises 95 residues: Co-chaperonin GroES (95 aa).

The protein belongs to the GroES chaperonin family. Heptamer of 7 subunits arranged in a ring. Interacts with the chaperonin GroEL.

The protein resides in the cytoplasm. Its function is as follows. Together with the chaperonin GroEL, plays an essential role in assisting protein folding. The GroEL-GroES system forms a nano-cage that allows encapsulation of the non-native substrate proteins and provides a physical environment optimized to promote and accelerate protein folding. GroES binds to the apical surface of the GroEL ring, thereby capping the opening of the GroEL channel. In Glaesserella parasuis serovar 5 (strain SH0165) (Haemophilus parasuis), this protein is Co-chaperonin GroES.